The sequence spans 222 residues: Small ribosomal subunit protein eS8z (222 aa).

2 disordered regions span residues 1–37 and 125–147; these read MGIS…ANTK and KKKS…VAAP. Residues 8–26 show a composition bias toward basic residues; that stretch reads IHKRRATGGKQKQWRKKRK.

Belongs to the eukaryotic ribosomal protein eS8 family.

This Arabidopsis thaliana (Mouse-ear cress) protein is Small ribosomal subunit protein eS8z (RPS8A).